The following is an 883-amino-acid chain: Alanine--tRNA ligase (883 aa).

Residues histidine 565, histidine 569, cysteine 675, and histidine 679 each coordinate Zn(2+).

It belongs to the class-II aminoacyl-tRNA synthetase family. It depends on Zn(2+) as a cofactor.

It localises to the cytoplasm. It carries out the reaction tRNA(Ala) + L-alanine + ATP = L-alanyl-tRNA(Ala) + AMP + diphosphate. Functionally, catalyzes the attachment of alanine to tRNA(Ala) in a two-step reaction: alanine is first activated by ATP to form Ala-AMP and then transferred to the acceptor end of tRNA(Ala). Also edits incorrectly charged Ser-tRNA(Ala) and Gly-tRNA(Ala) via its editing domain. This chain is Alanine--tRNA ligase, found in Rhodospirillum rubrum (strain ATCC 11170 / ATH 1.1.1 / DSM 467 / LMG 4362 / NCIMB 8255 / S1).